The primary structure comprises 161 residues: Pro-corazonin (161 aa).

A signal peptide spans 1–20 (MMRLLLLPLFLFTLSMACMG). Q21 carries the post-translational modification Pyrrolidone carboxylic acid. An Asparagine amide modification is found at N31. A propeptide spanning residues 70–161 (LERCLAQLQR…SGEPSVFGKH (92 aa)) is cleaved from the precursor. 2 disordered regions span residues 93 to 125 (NANR…TPIQ) and 142 to 161 (VAGS…FGKH). Low complexity predominate over residues 102–117 (SDSGSSRNRANNNNEN).

It belongs to the corazonin family.

The protein localises to the secreted. In terms of biological role, cardioactive peptide. Corazonin is probably involved in the physiological regulation of the heart beat. Clock (Clk) and cycle (cyc) proteins negatively regulate Crz transcription in a cell-specific manner. The polypeptide is Pro-corazonin (Drosophila pseudoobscura pseudoobscura (Fruit fly)).